We begin with the raw amino-acid sequence, 434 residues long: MITSRAFAGRRYAVLGLARSGLATVEALVASGAGVTAWDDREEARDAAMALGADIGNPLDIDLIGFAGVVVSPGVPLNRHPIAAHARDAHVPVIGDIELFAEARSELPPHKVVGITGTNGKSTVTALIAHMLESAGVPVLMGGNIGLPILTREPLPEAGVYVLELSSFQIDLAHSLACDVAVLTNISPDHLDRYDGFEGYVASKARLFSLQHRDQVAIIATDDDPSKMIASRVNHRLHRVSAKDIDPVDQARWPALQGPHNAQNAVCAIAACRVLGLDDEAIERGLATFRSLPHRMELVGEARGARWYNDSKATNAASAAPALAAFPPAPDQRLHWIAGGQAKGDGLAACRPWFGHVKRAYLIGEAMAPFAAEIGDAIAIERSGDLASAVAQAAAAVQPGDIVLLSPACASFDQFKDYEARGEAFRAAVEALGA.

Residue 117 to 123 (GTNGKST) participates in ATP binding.

It belongs to the MurCDEF family.

The protein resides in the cytoplasm. The enzyme catalyses UDP-N-acetyl-alpha-D-muramoyl-L-alanine + D-glutamate + ATP = UDP-N-acetyl-alpha-D-muramoyl-L-alanyl-D-glutamate + ADP + phosphate + H(+). It functions in the pathway cell wall biogenesis; peptidoglycan biosynthesis. Cell wall formation. Catalyzes the addition of glutamate to the nucleotide precursor UDP-N-acetylmuramoyl-L-alanine (UMA). This is UDP-N-acetylmuramoylalanine--D-glutamate ligase from Sphingopyxis alaskensis (strain DSM 13593 / LMG 18877 / RB2256) (Sphingomonas alaskensis).